The chain runs to 360 residues: DNA replication and repair protein RecF (360 aa).

Residue 30 to 37 (GENGAGKT) coordinates ATP.

The protein belongs to the RecF family.

It is found in the cytoplasm. Functionally, the RecF protein is involved in DNA metabolism; it is required for DNA replication and normal SOS inducibility. RecF binds preferentially to single-stranded, linear DNA. It also seems to bind ATP. This chain is DNA replication and repair protein RecF, found in Deinococcus deserti (strain DSM 17065 / CIP 109153 / LMG 22923 / VCD115).